The primary structure comprises 276 residues: Probable endonuclease 4 (276 aa).

Residues His-67, His-107, Glu-142, Asp-176, His-179, His-211, Asp-224, His-226, and Glu-256 each coordinate Zn(2+).

This sequence belongs to the AP endonuclease 2 family. Zn(2+) is required as a cofactor.

The enzyme catalyses Endonucleolytic cleavage to 5'-phosphooligonucleotide end-products.. Its function is as follows. Endonuclease IV plays a role in DNA repair. It cleaves phosphodiester bonds at apurinic or apyrimidinic (AP) sites, generating a 3'-hydroxyl group and a 5'-terminal sugar phosphate. The chain is Probable endonuclease 4 from Methanosphaera stadtmanae (strain ATCC 43021 / DSM 3091 / JCM 11832 / MCB-3).